The primary structure comprises 1190 residues: Isoleucine--tRNA ligase, cytoplasmic (1190 aa).

The short motif at 49 to 59 (PFATGLPHYGH) is the 'HIGH' region element. The disordered stretch occupies residues 271 to 299 (DKPKAKLSNGPAGDTKKANPKAKGAKPES). A 'KMSKS' region motif is present at residues 632–636 (KMAKK). Lys-635 provides a ligand contact to ATP.

This sequence belongs to the class-I aminoacyl-tRNA synthetase family.

The protein localises to the cytoplasm. It localises to the cytosol. The catalysed reaction is tRNA(Ile) + L-isoleucine + ATP = L-isoleucyl-tRNA(Ile) + AMP + diphosphate. The polypeptide is Isoleucine--tRNA ligase, cytoplasmic (Arabidopsis thaliana (Mouse-ear cress)).